A 231-amino-acid chain; its full sequence is Orotate phosphoribosyltransferase (231 aa).

5-phospho-alpha-D-ribose 1-diphosphate-binding positions include lysine 27, 79-80, arginine 106, lysine 107, lysine 110, histidine 112, and 133-141; these read YK and DDVMTAGTA. Positions 137 and 166 each coordinate orotate.

This sequence belongs to the purine/pyrimidine phosphoribosyltransferase family. PyrE subfamily. As to quaternary structure, homodimer. Requires Mg(2+) as cofactor.

It catalyses the reaction orotidine 5'-phosphate + diphosphate = orotate + 5-phospho-alpha-D-ribose 1-diphosphate. It participates in pyrimidine metabolism; UMP biosynthesis via de novo pathway; UMP from orotate: step 1/2. Its function is as follows. Catalyzes the transfer of a ribosyl phosphate group from 5-phosphoribose 1-diphosphate to orotate, leading to the formation of orotidine monophosphate (OMP). The sequence is that of Orotate phosphoribosyltransferase from Bifidobacterium longum (strain DJO10A).